The sequence spans 235 residues: Urease accessory protein UreF (235 aa).

This sequence belongs to the UreF family. UreD, UreF and UreG form a complex that acts as a GTP-hydrolysis-dependent molecular chaperone, activating the urease apoprotein by helping to assemble the nickel containing metallocenter of UreC. The UreE protein probably delivers the nickel.

It localises to the cytoplasm. In terms of biological role, required for maturation of urease via the functional incorporation of the urease nickel metallocenter. In Pseudoalteromonas translucida (strain TAC 125), this protein is Urease accessory protein UreF.